The following is an 85-amino-acid chain: Transcriptional repressor protein KorC (85 aa).

The H-T-H motif DNA-binding region spans 28 to 47 (EVLRLAGLTGGKAAKVLGLG).

Acts with KorA as corepressor in the control of the kilC and kilE operons. This Escherichia coli protein is Transcriptional repressor protein KorC (korC).